The chain runs to 91 residues: NADH-ubiquinone oxidoreductase chain 4L (91 aa).

Helical transmembrane passes span 2–22 (LIMILIFLIALLGLGLSQTHL) and 38–58 (LGLGMVSISGLHYPLMIALVL).

It belongs to the complex I subunit 4L family.

It localises to the mitochondrion membrane. The catalysed reaction is a ubiquinone + NADH + 5 H(+)(in) = a ubiquinol + NAD(+) + 4 H(+)(out). In terms of biological role, core subunit of the mitochondrial membrane respiratory chain NADH dehydrogenase (Complex I) that is believed to belong to the minimal assembly required for catalysis. Complex I functions in the transfer of electrons from NADH to the respiratory chain. The immediate electron acceptor for the enzyme is believed to be ubiquinone. The polypeptide is NADH-ubiquinone oxidoreductase chain 4L (ND4L) (Branchiostoma floridae (Florida lancelet)).